The primary structure comprises 228 residues: Phosphatidylglycerophosphate phosphatase PTPMT2 (228 aa).

Acidic residues predominate over residues 1 to 10; sequence MTDETEEDDT. Positions 1-30 are disordered; it reads MTDETEEDDTTQQRSSRNDGVSKNKGKGFK. Substrate contacts are provided by Tyr48 and Asp126. The Tyrosine-protein phosphatase domain maps to 66 to 213; sequence WWDQIDEYLL…VEEFSRLQSP (148 aa). Cys157 acts as the Phosphocysteine intermediate in catalysis. The Glucan phosphatase signature motif CXAGXGR motif lies at 157 to 163; the sequence is CKAGRGR. 158 to 163 contacts substrate; that stretch reads KAGRGR.

Belongs to the protein-tyrosine phosphatase family. Non-receptor class dual specificity subfamily. In terms of tissue distribution, expressed in roots, leaves, stems and flowers. As to expression, expressed at low levels in stems and flowers.

It carries out the reaction O-phospho-L-seryl-[protein] + H2O = L-seryl-[protein] + phosphate. The catalysed reaction is O-phospho-L-threonyl-[protein] + H2O = L-threonyl-[protein] + phosphate. It catalyses the reaction O-phospho-L-tyrosyl-[protein] + H2O = L-tyrosyl-[protein] + phosphate. The enzyme catalyses a 1,2-diacyl-sn-glycero-3-phospho-(1'-sn-glycero-3'-phosphate) + H2O = a 1,2-diacyl-sn-glycero-3-phospho-(1'-sn-glycerol) + phosphate. It participates in phospholipid metabolism; phosphatidylglycerol biosynthesis; phosphatidylglycerol from CDP-diacylglycerol: step 2/2. Exhibits phosphatidylglycerophosphate phosphatase activity. Involved in root growth and columella cells organization. May possess protein phosphatase activity. The polypeptide is Phosphatidylglycerophosphate phosphatase PTPMT2 (Arabidopsis thaliana (Mouse-ear cress)).